Consider the following 1101-residue polypeptide: ATP-citrate synthase (1101 aa).

The ATP-grasp domain maps to 4–265; it reads KAISEQTGKE…LDAKSGASLK (262 aa). 6 residues coordinate ATP: K58, R66, G67, P109, V111, and E118. Y131 carries the post-translational modification Phosphotyrosine. ATP is bound at residue D216. D257, S260, and A262 together coordinate Mg(2+). Position 263 is a phosphoserine (S263). Residues G309, N346, T348, Y364, and R379 each coordinate citrate. A compositionally biased stretch (low complexity) spans 441–457; that stretch reads ASGSTSTPAPSRTASFS. Positions 441–487 are disordered; it reads ASGSTSTPAPSRTASFSESRADEVAPAKKAKPAMPQDSVPSPRSLQG. T447 carries the post-translational modification Phosphothreonine. The residue at position 451 (S451) is a Phosphoserine. The residue at position 455 (S455) is a Phosphoserine; by PKA and PKB/AKT1 or PKB/AKT2 or BCKDK. Residues S459 and S481 each carry the phosphoserine modification. The segment covering 478–487 has biased composition (polar residues); the sequence is SVPSPRSLQG. Residues K540, K546, and K554 each carry the N6-acetyllysine; alternate modification. Glycyl lysine isopeptide (Lys-Gly) (interchain with G-Cter in ubiquitin); alternate cross-links involve residues K540, K546, and K554. A Phosphothreonine modification is found at T639. At S663 the chain carries Phosphoserine. Phosphotyrosine is present on Y682. H760 functions as the Tele-phosphohistidine intermediate in the catalytic mechanism. Residue 779–789 coordinates CoA; the sequence is LKEAGVFVPRS. S839 carries the phosphoserine modification. 4 positions are modified to N6-acetyllysine: K948, K968, K978, and K1077. S1100 carries the post-translational modification Phosphoserine.

This sequence in the N-terminal section; belongs to the succinate/malate CoA ligase beta subunit family. The protein in the C-terminal section; belongs to the succinate/malate CoA ligase alpha subunit family. In terms of assembly, homotetramer. Mg(2+) serves as cofactor. Phosphorylated by PKA and GSK3 in a sequential manner; phosphorylation results in activation of its activity. Phosphorylation on Thr-447 and Ser-451 depends on the phosphorylation state of Ser-455. Phosphorylation on Ser-455 is decreased by prior phosphorylation on the other 2 residues. Phosphorylated at Ser-455 by BCKDK and dephosphorylated by protein phosphatase PPM1K. In terms of processing, ISGylated. Post-translationally, acetylated at Lys-540, Lys-546 and Lys-554 by KAT2B/PCAF. Acetylation is promoted by glucose and stabilizes the protein, probably by preventing ubiquitination at the same sites. Acetylation promotes de novo lipid synthesis. Deacetylated by SIRT2. Ubiquitinated at Lys-540, Lys-546 and Lys-554 by the BCR(KLHL25) E3 ubiquitin ligase complex and UBR4, leading to its degradation. Ubiquitination is probably inhibited by acetylation at same site. BCR(KLHL25)-mediated degradation of ACLY promotes fatty acid oxidation and is required for differentiation of inducible regulatory T (iTreg) cells.

Its subcellular location is the cytoplasm. It is found in the cytosol. The enzyme catalyses oxaloacetate + acetyl-CoA + ADP + phosphate = citrate + ATP + CoA. Phosphorylation results in activation of its activity. Glucose 6-phosphate, fructose 6-phosphate, fructose 2,6-bisphosphate, ribulose 5-phosphate, and fructose 1,6-bisphosphate also act as activators. Functionally, catalyzes the cleavage of citrate into oxaloacetate and acetyl-CoA, the latter serving as common substrate in multiple biochemical reactions in protein, carbohydrate and lipid metabolism. This chain is ATP-citrate synthase (ACLY), found in Homo sapiens (Human).